A 556-amino-acid chain; its full sequence is Potassium-transporting ATPase potassium-binding subunit (556 aa).

10 consecutive transmembrane segments (helical) span residues 6 to 26 (AGIA…VPLG), 65 to 85 (SVLA…LVQG), 133 to 153 (GLAV…IALV), 176 to 196 (LRIL…GGAI), 249 to 269 (PTPW…FSLP), 283 to 303 (VAIA…TMLL), 378 to 398 (GLYG…LMVG), 415 to 435 (LAAS…AIAM), 483 to 503 (ALGL…LALA), and 526 to 546 (FVGM…LPIL).

Belongs to the KdpA family. As to quaternary structure, the system is composed of three essential subunits: KdpA, KdpB and KdpC.

The protein localises to the cell membrane. In terms of biological role, part of the high-affinity ATP-driven potassium transport (or Kdp) system, which catalyzes the hydrolysis of ATP coupled with the electrogenic transport of potassium into the cytoplasm. This subunit binds the extracellular potassium ions and delivers the ions to the membrane domain of KdpB through an intramembrane tunnel. The chain is Potassium-transporting ATPase potassium-binding subunit from Mycolicibacterium smegmatis (strain ATCC 700084 / mc(2)155) (Mycobacterium smegmatis).